A 775-amino-acid polypeptide reads, in one-letter code: Phenylalanine--tRNA ligase beta subunit (775 aa).

The 109-residue stretch at 39–147 (GIDLDGVVFG…EDFKPGTDAN (109 aa)) folds into the tRNA-binding domain. The B5 domain maps to 394 to 470 (YKPKKVFLPQ…RVKGYEHYTS (77 aa)). Residues Asp-448, Asp-454, Glu-457, and Glu-458 each contribute to the Mg(2+) site. An FDX-ACB domain is found at 681 to 774 (AKFPPVVRDI…LKEKYGVELR (94 aa)).

It belongs to the phenylalanyl-tRNA synthetase beta subunit family. Type 1 subfamily. Tetramer of two alpha and two beta subunits. Requires Mg(2+) as cofactor.

It localises to the cytoplasm. It carries out the reaction tRNA(Phe) + L-phenylalanine + ATP = L-phenylalanyl-tRNA(Phe) + AMP + diphosphate + H(+). This chain is Phenylalanine--tRNA ligase beta subunit (pheT), found in Aquifex aeolicus (strain VF5).